The chain runs to 340 residues: DNA-directed RNA polymerase subunit alpha (340 aa).

The interval 1–237 (MSSDELVYMN…EQMNPFINFD (237 aa)) is alpha N-terminal domain (alpha-NTD). Positions 256 to 340 (FNENLYRSVD…PEEDQIKEGE (85 aa)) are alpha C-terminal domain (alpha-CTD).

It belongs to the RNA polymerase alpha chain family. In terms of assembly, homodimer. The RNAP catalytic core consists of 2 alpha, 1 beta, 1 beta' and 1 omega subunit. When a sigma factor is associated with the core the holoenzyme is formed, which can initiate transcription.

It catalyses the reaction RNA(n) + a ribonucleoside 5'-triphosphate = RNA(n+1) + diphosphate. Functionally, DNA-dependent RNA polymerase catalyzes the transcription of DNA into RNA using the four ribonucleoside triphosphates as substrates. The polypeptide is DNA-directed RNA polymerase subunit alpha (Desulforapulum autotrophicum (strain ATCC 43914 / DSM 3382 / VKM B-1955 / HRM2) (Desulfobacterium autotrophicum)).